The chain runs to 130 residues: Small ribosomal subunit protein uS9 (130 aa).

This sequence belongs to the universal ribosomal protein uS9 family.

This chain is Small ribosomal subunit protein uS9, found in Albidiferax ferrireducens (strain ATCC BAA-621 / DSM 15236 / T118) (Rhodoferax ferrireducens).